The sequence spans 83 residues: Large ribosomal subunit protein bL31B (83 aa).

Belongs to the bacterial ribosomal protein bL31 family. Type B subfamily. As to quaternary structure, part of the 50S ribosomal subunit.

This is Large ribosomal subunit protein bL31B from Leifsonia xyli subsp. xyli (strain CTCB07).